Consider the following 287-residue polypeptide: Protoheme IX farnesyltransferase (287 aa).

A run of 8 helical transmembrane segments spans residues 9 to 29 (IVTMILVTTVASALIAGSATL), 31 to 51 (LIDWFWLMIGTALIAGSAGAA), 94 to 114 (IILWLGNGLVPACVGIATWLI), 132 to 152 (VGAIAGALPVFIGYTAAGGTL), 158 to 178 (WMLFGVLACWQYPHFMAIAWL), 202 to 222 (AWQSILGSVALATCGVVLAWF), 228 to 248 (VASAASVLATVLILAASWPLL), and 267 to 287 (LRWSLVVLPAVLLVMTLRASL).

The protein belongs to the UbiA prenyltransferase family. Protoheme IX farnesyltransferase subfamily.

The protein resides in the cell inner membrane. It carries out the reaction heme b + (2E,6E)-farnesyl diphosphate + H2O = Fe(II)-heme o + diphosphate. It functions in the pathway porphyrin-containing compound metabolism; heme O biosynthesis; heme O from protoheme: step 1/1. Its function is as follows. Converts heme B (protoheme IX) to heme O by substitution of the vinyl group on carbon 2 of heme B porphyrin ring with a hydroxyethyl farnesyl side group. The chain is Protoheme IX farnesyltransferase from Rhodopirellula baltica (strain DSM 10527 / NCIMB 13988 / SH1).